A 619-amino-acid chain; its full sequence is Mitogen-activated protein kinase kinase kinase 2 (619 aa).

Disordered regions lie at residues 25 to 44 (LSLQETRKAKPSSPKKQNDV), 126 to 168 (QATN…PPPG), 201 to 245 (LDPL…DNHQ), and 289 to 355 (RTQG…APTN). Ser26 bears the Phosphoserine mark. One can recognise a PB1 domain in the interval 43 to 122 (DVRVKFEHRG…KSLKILLVVN (80 aa)). A compositionally biased stretch (polar residues) spans 126 to 143 (QATNLEPSPSPEDLNNTP). 2 positions are modified to phosphoserine: Ser153 and Ser164. Positions 203–219 (PLSLSSPENSGSGSCPS) are enriched in low complexity. Phosphoserine occurs at positions 239, 297, 311, 331, 344, and 349. The span at 290-299 (TQGTSFRSPV) shows a compositional bias: polar residues. Residues 300 to 315 (SFSPTDHSLSTSSGSS) are compositionally biased toward low complexity. Residues 322–332 (DDSRIRRRGSD) show a composition bias toward basic and acidic residues. Residues 336–346 (PTLTVTDISPP) show a composition bias toward polar residues. The region spanning 356–616 (WRLGKLLGQG…AEELLRHMFV (261 aa)) is the Protein kinase domain. ATP contacts are provided by residues 362-370 (LGQGAFGRV) and Lys385. Asp483 (proton acceptor) is an active-site residue.

Belongs to the protein kinase superfamily. STE Ser/Thr protein kinase family. MAP kinase kinase kinase subfamily. Self-associates. Binds both upstream activators and downstream substrates in multimolecular complexes. Interacts (via the kinase catalytic domain) with STK38. Interacts with XIAP/BIRC4. Mg(2+) serves as cofactor. In terms of processing, ubiquitination by XIAP/BIRC4 does not lead to proteasomal degradation. Post-translationally, autophosphorylated.

The protein resides in the cytoplasm. Its subcellular location is the nucleus. It catalyses the reaction L-seryl-[protein] + ATP = O-phospho-L-seryl-[protein] + ADP + H(+). It carries out the reaction L-threonyl-[protein] + ATP = O-phospho-L-threonyl-[protein] + ADP + H(+). Its activity is regulated as follows. Activated by phosphorylation on Thr-524. Interacts with PKN2; the interaction activates PKN2 kinase activity in a MAP3K2-independent kinase activity. Functionally, component of a protein kinase signal transduction cascade. Regulates the JNK and ERK5 pathways by phosphorylating and activating MAP2K5 and MAP2K7. Plays a role in caveolae kiss-and-run dynamics. In Mus musculus (Mouse), this protein is Mitogen-activated protein kinase kinase kinase 2 (Map3k2).